The chain runs to 473 residues: M-phase inducer phosphatase 3 (473 aa).

The tract at residues 1 to 23 (MSTELFSSTREEGSSGSGPSFRS) is disordered. Position 2 is an N-acetylserine (Ser-2). Phosphoserine occurs at positions 20 and 38. Thr-48 is modified (phosphothreonine). Phosphoserine is present on residues Ser-57, Ser-61, and Ser-64. Thr-67 bears the Phosphothreonine mark. Ser-122 carries the phosphoserine; by CDK1 modification. Ser-129 carries the post-translational modification Phosphoserine. Phosphothreonine is present on Thr-130. The interval 132–158 (NGLDRGHRKRDAMCSSSANKENDNGNL) is disordered. The segment covering 145–158 (CSSSANKENDNGNL) has biased composition (polar residues). At Ser-168 the chain carries Phosphoserine. Phosphoserine; by PLK3 is present on residues Ser-191 and Ser-198. Ser-214 carries the post-translational modification Phosphoserine; by CDK1. Residue Ser-216 is modified to Phosphoserine; by CHEK1, CHEK2, BRSK1, MAPK14 AND MARK3. Positions 321–428 (LIEKFYVIDC…FFPEYMELCE (108 aa)) constitute a Rhodanese domain. The HIV-1 Vpr binding site stretch occupies residues 334-379 (YEYLGGHIQGALNLYSQEELFNFFLKKPIVPLDTQKRIIIVFHCEF). Cys-377 is an active-site residue. Ser-472 carries the post-translational modification Phosphoserine.

The protein belongs to the MPI phosphatase family. As to quaternary structure, interacts with MAPK14 and 14-3-3 proteins. When phosphorylated on Ser-129 and/or Thr-130, interacts with PLK1. Interacts with MARK3/C-TAK1. In terms of assembly, (Microbial infection) Interacts with HIV-1 Vpr; this interaction inactivates CDC25C phosphatase activity. In terms of processing, phosphorylated by CHEK1 and MAPK14 at Ser-216. This phosphorylation creates a binding site for 14-3-3 protein and inhibits the phosphatase. Phosphorylated by PLK4. Phosphorylated by PLK1, leading to activate the phosphatase activity. Phosphorylation by PLK3 at Ser-191 promotes nuclear translocation. Ser-198 is a minor phosphorylation site. Was initially reported to be phosphorylated by PLK3 at Ser-216. However, such phosphorylation by PLK3 was not confirmed by other groups. Phosphorylation at Thr-48, Thr-67, Ser-122, Thr-130, Ser-168 and Ser-214 occurs at G2 and G2-M transition and is probably catalyzed by CDK1. Ser-168 phosphorylation levels are lower than those at the other 5 CDK1 sites. Phosphorylation by CDK1 leads to increased activity.

It is found in the nucleus. It catalyses the reaction O-phospho-L-tyrosyl-[protein] + H2O = L-tyrosyl-[protein] + phosphate. Its function is as follows. Functions as a dosage-dependent inducer in mitotic control. Tyrosine protein phosphatase required for progression of the cell cycle. When phosphorylated, highly effective in activating G2 cells into prophase. Directly dephosphorylates CDK1 and activates its kinase activity. This chain is M-phase inducer phosphatase 3 (CDC25C), found in Homo sapiens (Human).